The sequence spans 95 residues: Small ribosomal subunit protein uS19 (95 aa).

Positions 76–95 are disordered; sequence PTRTFRGHGGKKADKRGKLK. Over residues 80–95 the composition is skewed to basic residues; the sequence is FRGHGGKKADKRGKLK.

The protein belongs to the universal ribosomal protein uS19 family.

Protein S19 forms a complex with S13 that binds strongly to the 16S ribosomal RNA. This is Small ribosomal subunit protein uS19 from Herpetosiphon aurantiacus (strain ATCC 23779 / DSM 785 / 114-95).